The chain runs to 508 residues: Ras association domain-containing protein 10 (508 aa).

Positions 1 to 133 (MDPSEKKISV…VRFVLVRSEA (133 aa)) constitute a Ras-associating domain. 2 disordered regions span residues 51-81 (RRGL…AMPP) and 186-221 (KLNR…ESAS). A compositionally biased stretch (acidic residues) spans 66–78 (EPPDENDEDDDDA). Positions 195–214 (PSSPCSSTSSSTASSCSSSA) are enriched in low complexity. 2 coiled-coil regions span residues 235–266 (QDHT…DRMR) and 319–358 (LEEL…NQRW). The segment at 473–508 (GLAKSCPGNDEDSDTGLSSMHSQDSDSVPPVCESLV) is disordered. The segment covering 487–498 (TGLSSMHSQDSD) has biased composition (polar residues).

As to expression, expressed in neural progenitor cells (at protein level).

The protein resides in the cytoplasm. Its subcellular location is the cytosol. The protein localises to the cytoskeleton. It localises to the microtubule organizing center. It is found in the centrosome. The protein resides in the spindle pole. Its function is as follows. Plays an important role in regulating embryonic neurogenesis. This is Ras association domain-containing protein 10 (Rassf10) from Mus musculus (Mouse).